The primary structure comprises 329 residues: MLSFFTKNTLTKRKLIMLALAIVFTFFAFGLYFIPHDEISVFDFKLPALQYETTVTSLDNFLIGGSTTLYTATVNHEDLNEPKSHEIVMLLASDGNVGSFESNLLDDCFKNRIEYAKLQNYNFEFVNVSSLVVPPVWGKMPAILQTMRKYPSAKWIWWLDQDALIMNKNLSLQELFLSPAMLQKSLLREQPIINSFGEDNFRITPAAYSKEMIEQIQFLISQDHNGLNAGSFLVRNSRSIALLMDLLTDPSLADAGVVRHEQDLIGYFIQKHSQVASMVGILPQRFINAFHEGPPTMQWQEGDLALHFAGCWVENKCAELWTKYKDKII.

At 1–14 (MLSFFTKNTLTKRK) the chain is on the cytoplasmic side. A helical; Signal-anchor for type II membrane protein membrane pass occupies residues 15–35 (LIMLALAIVFTFFAFGLYFIP). Over 36–329 (HDEISVFDFK…LWTKYKDKII (294 aa)) the chain is Lumenal. 2 N-linked (GlcNAc...) asparagine glycosylation sites follow: N127 and N169.

Belongs to the glycosyltransferase 34 family.

The protein resides in the golgi apparatus membrane. This is Probable alpha-1,2-galactosyltransferase gmh1 (gmh1) from Schizosaccharomyces pombe (strain 972 / ATCC 24843) (Fission yeast).